The following is a 284-amino-acid chain: Bifunctional protein FolD (284 aa).

166-168 (GAS) lines the NADP(+) pocket.

It belongs to the tetrahydrofolate dehydrogenase/cyclohydrolase family. In terms of assembly, homodimer.

It carries out the reaction (6R)-5,10-methylene-5,6,7,8-tetrahydrofolate + NADP(+) = (6R)-5,10-methenyltetrahydrofolate + NADPH. The catalysed reaction is (6R)-5,10-methenyltetrahydrofolate + H2O = (6R)-10-formyltetrahydrofolate + H(+). It functions in the pathway one-carbon metabolism; tetrahydrofolate interconversion. Its function is as follows. Catalyzes the oxidation of 5,10-methylenetetrahydrofolate to 5,10-methenyltetrahydrofolate and then the hydrolysis of 5,10-methenyltetrahydrofolate to 10-formyltetrahydrofolate. This is Bifunctional protein FolD from Nitrosococcus oceani (strain ATCC 19707 / BCRC 17464 / JCM 30415 / NCIMB 11848 / C-107).